Consider the following 285-residue polypeptide: Integrin alpha-1 (285 aa).

Over 1–285 (ENMTFGTTLV…HYSQDWVMLG (285 aa)) the chain is Extracellular. Residues Asn2, Asn40, Asn208, and Asn232 are each glycosylated (N-linked (GlcNAc...) asparagine). In terms of domain architecture, VWFA spans 66–279 (IVLDGSNSIY…QAGFSAHYSQ (214 aa)).

The protein belongs to the integrin alpha chain family. In terms of assembly, heterodimer of an alpha and a beta subunit. Alpha-1 associates with beta-1.

Its subcellular location is the membrane. In terms of biological role, integrin alpha-1/beta-1 is a receptor for laminin and collagen. It recognizes the proline-hydroxylated sequence G-F-P-G-E-R in collagen. Involved in anchorage-dependent, negative regulation of EGF-stimulated cell growth. The chain is Integrin alpha-1 (ITGA1) from Gallus gallus (Chicken).